We begin with the raw amino-acid sequence, 377 residues long: Chaperone protein DnaJ 1 (377 aa).

A J domain is found at 4 to 68; it reads DYYQTLGVTR…EIRQRYDQFG (65 aa). A CR-type zinc finger spans residues 136 to 218; it reads GGEKEIRIPH…CNGVGRKQET (83 aa). Residues Cys149, Cys152, Cys166, Cys169, Cys192, Cys195, Cys206, and Cys209 each contribute to the Zn(2+) site. CXXCXGXG motif repeat units lie at residues 149 to 156, 166 to 173, 192 to 199, and 206 to 213; these read CQVCEGTG, CGTCNGAG, CPTCNGSG, and CEACNGVG.

This sequence belongs to the DnaJ family. As to quaternary structure, homodimer. Zn(2+) serves as cofactor.

The protein localises to the cytoplasm. Its function is as follows. Participates actively in the response to hyperosmotic and heat shock by preventing the aggregation of stress-denatured proteins and by disaggregating proteins, also in an autonomous, DnaK-independent fashion. Unfolded proteins bind initially to DnaJ; upon interaction with the DnaJ-bound protein, DnaK hydrolyzes its bound ATP, resulting in the formation of a stable complex. GrpE releases ADP from DnaK; ATP binding to DnaK triggers the release of the substrate protein, thus completing the reaction cycle. Several rounds of ATP-dependent interactions between DnaJ, DnaK and GrpE are required for fully efficient folding. Also involved, together with DnaK and GrpE, in the DNA replication of plasmids through activation of initiation proteins. The chain is Chaperone protein DnaJ 1 from Synechocystis sp. (strain ATCC 27184 / PCC 6803 / Kazusa).